The chain runs to 99 residues: Acylphosphatase (99 aa).

The 93-residue stretch at 5 to 97 (VRQVMIRGRV…RPGERFSQLP (93 aa)) folds into the Acylphosphatase-like domain. Catalysis depends on residues R20 and N38.

The protein belongs to the acylphosphatase family.

It catalyses the reaction an acyl phosphate + H2O = a carboxylate + phosphate + H(+). This chain is Acylphosphatase (acyP), found in Nitrobacter winogradskyi (strain ATCC 25391 / DSM 10237 / CIP 104748 / NCIMB 11846 / Nb-255).